A 445-amino-acid polypeptide reads, in one-letter code: MDIRQVTETIAMIEEQNFDIRTITMGISLLDCIDPNINRAAEKIYQKITTKAANLVAVGDEIAAELGIPIVNKRVSVTPISLIGAATDATDYVVLAKALDKAAKEIGVDFIGGFSALVQKGYQKGDEILINSIPRALAETDKVCSSVNIGSTKSGINMTAVADMGRIIKETANLSDMGVAKLVVFANAVEDNPFMAGAFHGVGEADVIINVGVSGPGVVKRALEKVRGQSFDVVAETVKKTAFKITRIGQLVGQMASERLGVEFGIVDLSLAPTPAVGDSVARVLEEMGLETVGTHGTTAALALLNDQVKKGGVMACNQVGGLSGAFIPVSEDEGMIAAVQNGSLNLEKLEAMTAICSVGLDMIAIPEDTPAETIAAMIADEAAIGVINMKTTAVRIIPKGREGDMIEFGGLLGTAPVMKVNGASSVDFISRGGQIPAPIHSFKN.

This sequence belongs to the UPF0210 family. As to quaternary structure, homodimer.

The chain is UPF0210 protein SPT_0285 from Streptococcus pneumoniae (strain Taiwan19F-14).